We begin with the raw amino-acid sequence, 853 residues long: Transcription factor CPH2 (853 aa).

2 disordered regions span residues 165 to 209 and 296 to 353; these read EPPI…DKNS and NMNP…VHHP. A compositionally biased stretch (low complexity) spans 180-194; it reads TTTVSSTNSITNTTK. A bHLH domain is found at 205–274; it reads KDKNSHNMIE…TKATEYIKHL (70 aa). Pro residues predominate over residues 301-315; that stretch reads SLPPPPQQMQAPPQP. Residues 330–352 are compositionally biased toward low complexity; that stretch reads TPASQYPSPQQQVSPTQQQTVHH.

The protein localises to the nucleus. Its function is as follows. Transcription factor that positively controls filamentous growth, virulence, and invasiveness. Binds directly to the two SRE-1-like elements upstream of TEC1 and thus positively regulates expression of this important hyphal growth regulator. Functions independently of known signaling cascades involving EFG1. Also regulates gene expression during intestinal colonization but is not involved in host cell adhesion. The protein is Transcription factor CPH2 (CPH2) of Candida albicans (strain SC5314 / ATCC MYA-2876) (Yeast).